The following is a 532-amino-acid chain: Membrane protein insertase YidC (532 aa).

The next 5 helical transmembrane spans lie at 7–27 (FFIF…QSQM), 336–356 (LTIL…ITFI), 413–433 (GGFL…YMLI), 450–470 (LSSQ…MFFI), and 492–512 (PVIF…YYII).

It belongs to the OXA1/ALB3/YidC family. Type 1 subfamily. Interacts with the Sec translocase complex via SecD. Specifically interacts with transmembrane segments of nascent integral membrane proteins during membrane integration.

It is found in the cell membrane. Required for the insertion and/or proper folding and/or complex formation of integral membrane proteins into the membrane. Involved in integration of membrane proteins that insert both dependently and independently of the Sec translocase complex, as well as at least some lipoproteins. Aids folding of multispanning membrane proteins. This Buchnera aphidicola subsp. Acyrthosiphon pisum (strain APS) (Acyrthosiphon pisum symbiotic bacterium) protein is Membrane protein insertase YidC.